The sequence spans 430 residues: Glutamate-1-semialdehyde 2,1-aminomutase (430 aa).

Lys265 is subject to N6-(pyridoxal phosphate)lysine.

Belongs to the class-III pyridoxal-phosphate-dependent aminotransferase family. HemL subfamily. In terms of assembly, homodimer. It depends on pyridoxal 5'-phosphate as a cofactor.

The protein localises to the cytoplasm. The catalysed reaction is (S)-4-amino-5-oxopentanoate = 5-aminolevulinate. Its pathway is porphyrin-containing compound metabolism; protoporphyrin-IX biosynthesis; 5-aminolevulinate from L-glutamyl-tRNA(Glu): step 2/2. The polypeptide is Glutamate-1-semialdehyde 2,1-aminomutase (Shewanella sp. (strain MR-7)).